The primary structure comprises 469 residues: MSVYLLHLASTHAHFHLPELETLAKIENVEFWLIPKSEYLNVAFKSDKSRNQALFSHAIKEFQDSISPNDATTQNPFMLAVVNSNEDARRWIRRSIFCKGIYEIYCIGDSFTRLHEKMKELNPAPWDSFKHNSSYKFTFETFGTRRTMKEQLSIISDFEYMQLQGPVSMHNPQHVFTVLENRRNNVEGPKVYFGHWCGSGSRDAIDTFDLKQRSYIGITSFDAELSLVTAQMAMAAPGKLIYDPFVGTGSFLYTCSFFGAHTLGSDIDGRQMRGKNGRSIKSNFRQYKLSPFFLDTFTGDVTNCPLRKNLLLDAIVCDPPYGVRAGAKKIAKCSQRPPKESSSTGNHYPKLEQYQISDMVYDIICFASDRLVDGGRLVLWLPTITEEYGIDDIPSHPYLSLIYNSIQPFTHWSRRLLTFQRLPRAHDSKSLNLLPKINNKTPSHHNFREKYFSSAGRASASTKFSPVLE.

It belongs to the class I-like SAM-binding methyltransferase superfamily. TRM11 methyltransferase family. As to quaternary structure, interacts with trm112.

The protein localises to the cytoplasm. It localises to the nucleus. It catalyses the reaction guanosine(10) in tRNA + S-adenosyl-L-methionine = N(2)-methylguanosine(10) in tRNA + S-adenosyl-L-homocysteine + H(+). Catalytic subunit of an S-adenosyl-L-methionine-dependent tRNA methyltransferase complex that mediates the methylation of the guanosine nucleotide at position 10 (m2G10) in tRNAs. The polypeptide is tRNA (guanine(10)-N(2))-methyltransferase (trm11) (Schizosaccharomyces pombe (strain 972 / ATCC 24843) (Fission yeast)).